Reading from the N-terminus, the 526-residue chain is Cytochrome P450 monooxygenase 253 (526 aa).

Transmembrane regions (helical) follow at residues Ile-13–Ile-33, Phe-115–Lys-135, and Ile-306–Leu-326. Position 451 (Cys-451) interacts with heme.

Belongs to the cytochrome P450 family. The cofactor is heme.

It is found in the membrane. Its pathway is secondary metabolite biosynthesis. In terms of biological role, cytochrome P450 monooxygenase that is able to use delta(6)-protoilludene as a substrate to produce delta(6)-protoilludene-8-ol. This chain is Cytochrome P450 monooxygenase 253, found in Postia placenta (strain ATCC 44394 / Madison 698-R) (Brown rot fungus).